A 69-amino-acid chain; its full sequence is Amphipathic peptide Hp1404 (69 aa).

Residues 1–23 (MKTQFAILMITVVLMQMLVQTEG) form the signal peptide. A Phenylalanine amide modification is found at Phe37. A propeptide spanning residues 41 to 69 (GLKNLDQLDDSFDSDLSDADVKLLREMFK) is cleaved from the precursor.

Belongs to the non-disulfide-bridged peptide (NDBP) superfamily. Short antimicrobial peptide (group 4) family. In terms of tissue distribution, expressed by the venom gland.

It is found in the secreted. The protein resides in the target cell membrane. With respect to regulation, antibacterial activity is decreased by serum. Its function is as follows. Antimicrobial peptide that acts by inducing concentration-dependent membrane disruption, implying a membrane-lytic mode of action. Acts with potent activity against Gram-positive bacteria (MIC=4.04-16.16 uM) including methicillin-resistant S.aureus (MRSA). Its activity on Gram-negative bacteria is controversial. Li and colleagues (2014) describe no activity towards E.coli and P.aeruginosa, while Kim and colleagues (2018) describe a potent activity towards P.aeruginosa (MIC=3.13-12.5 uM), and Luo and colleagues (2021) describe a potent activity against antibiotic-sensitive and -resistant Acinetobacter baumannii strains (MIC=3.2-10 uM). On S.aureus, possibly acts by impairing an unknown intracellular target and/or by interacting with the membrane, leading to the lateral expansion of the membrane area at high MIC concentrations, resulting in the formation of mesosome-like structures that leads to cell lysis. Shows moderate inhibition of P.aeruginosa biofilm formation. Administration of this peptide at sub-MIC concentrations in multiple treatments does not lead to resistance in S.aureus. Exhibits low toxicity and hemolytic activity against mammalian cell lines and BALB/c mice. In vivo, improves the survival rate of the MRSA infected BALB/c mice in the peritonitis model. In Heterometrus petersii (Asian forest scorpion), this protein is Amphipathic peptide Hp1404.